We begin with the raw amino-acid sequence, 449 residues long: Tryptophan--tRNA ligase (449 aa).

ATP-binding positions include 10–12 (TTT) and 18–19 (GN). Residues 11–19 (TTGTPHLGN) carry the 'HIGH' region motif. Aspartate 143 serves as a coordination point for L-tryptophan. ATP is bound by residues 155–157 (GRD), leucine 197, and 204–208 (KMSKS). Positions 204–208 (KMSKS) match the 'KMSKS' region motif.

The protein belongs to the class-I aminoacyl-tRNA synthetase family. Homodimer.

It is found in the cytoplasm. The catalysed reaction is tRNA(Trp) + L-tryptophan + ATP = L-tryptophyl-tRNA(Trp) + AMP + diphosphate + H(+). Catalyzes the attachment of tryptophan to tRNA(Trp). In Pseudomonas syringae pv. tomato (strain ATCC BAA-871 / DC3000), this protein is Tryptophan--tRNA ligase.